Reading from the N-terminus, the 326-residue chain is Malate dehydrogenase (326 aa).

12–18 (GGTGQIA) provides a ligand contact to NAD(+). Residues Arg93 and Arg99 each contribute to the substrate site. Residues Asn106, Gln113, and 130–132 (VGN) each bind NAD(+). Residues Asn132 and Arg163 each coordinate substrate. Catalysis depends on His188, which acts as the Proton acceptor.

It belongs to the LDH/MDH superfamily. MDH type 2 family.

It catalyses the reaction (S)-malate + NAD(+) = oxaloacetate + NADH + H(+). Catalyzes the reversible oxidation of malate to oxaloacetate. This Chlamydia trachomatis serovar D (strain ATCC VR-885 / DSM 19411 / UW-3/Cx) protein is Malate dehydrogenase.